The following is a 430-amino-acid chain: MAAAVRAAGFLPALCGASAGRLWSRQLYLNTFPTASIWALKAVPSNGPSSSAGARGRCRSTHLGPALQTQCCTPAPGNVTAQQYRSYSFFTKLTADELWKGALAETGAGARKGRGKRTKRKRRKDLNRGQIIGEGRRGFLWPGLNAPLMKSGAIQTITQRSKEEQEKVEADMVQQREEWDRKRKMKVKRERGWSGNSWGGISLGPPDPGPNGETYDDFDTRILEVRNVFNMTAKEGRKRSVRVLVAVGNGRGAAGFAIGKATERADAFRKAKNRAVHYLHYIERYEDHTIYHDISLTFKRTHIKMKKQPRGYGLRCHRAITTICRLIGIKDMYAKVSGSVNMLSLTRGLFQGLSRQETHQQLADKKSLHVVEFREECGPLPIVVASPQGALRKDPEPEDEVPDIKLDWDDVKAVQGMKRSVWSGLKRAAT.

A disordered region spans residues 108–128 (AGARKGRGKRTKRKRRKDLNR). The span at 111 to 125 (RKGRGKRTKRKRRKD) shows a compositional bias: basic residues. One can recognise an S5 DRBM domain in the interval 218 to 282 (FDTRILEVRN…NRAVHYLHYI (65 aa)).

This sequence belongs to the universal ribosomal protein uS5 family. In terms of assembly, component of the mitochondrial ribosome small subunit (28S) which comprises a 12S rRNA and about 30 distinct proteins.

Its subcellular location is the mitochondrion. The protein is Small ribosomal subunit protein uS5m (MRPS5) of Bos taurus (Bovine).